Here is a 427-residue protein sequence, read N- to C-terminus: Trigger factor (427 aa).

Residues 163-248 form the PPIase FKBP-type domain; sequence GDTVILDFEG…LHEIKTKEVP (86 aa).

It belongs to the FKBP-type PPIase family. Tig subfamily.

It is found in the cytoplasm. It carries out the reaction [protein]-peptidylproline (omega=180) = [protein]-peptidylproline (omega=0). Functionally, involved in protein export. Acts as a chaperone by maintaining the newly synthesized protein in an open conformation. Functions as a peptidyl-prolyl cis-trans isomerase. The chain is Trigger factor from Listeria monocytogenes serotype 4b (strain CLIP80459).